Reading from the N-terminus, the 360-residue chain is MEKMFSLRAHAAPVSGFCPWENQLVSADRSGTLIVWNLSTRRPAARFRAHEGQVLSMQPTRFGLLTHGRDSAVRIWPPGAAENSKGGDPHPIFEMPVNALNFCNVAYIDGADGTALLATPASVDSDCFDVYRLSPDFSLARAVENQAPKQEQRGADQIEEIGAPPGRGEGIIMRLAWAAPDLLYVGYESGALASFSLSPEGCRMLWLARAHSPHPVLSLALEGARVYSGSAAKTLLVHEPPHEEAVAKHNLGHYGVQCFEILPHLYLAGFWDGSVAGFSRDWQQLFSLERPHEQIEAPESPSRKSLCLFVWSAPAAPEQSRRDRLRSRRAAGRLLFVGHADGLIVAYAIDESSENGLLES.

WD repeat units lie at residues 9–46, 49–86, 167–205, and 317–357; these read AHAA…PAAR, AHEG…NSKG, RGEG…CRML, and PEQS…ENGL.

Belongs to the WD repeat ASA1 family. Component of the ASTRA chromatin remodeling machinery complex.

Its subcellular location is the nucleus. In terms of biological role, component of the ASTRA complex involved in chromatin remodeling. In Clavispora lusitaniae (strain ATCC 42720) (Yeast), this protein is ASTRA-associated protein 1 (ASA1).